We begin with the raw amino-acid sequence, 217 residues long: Uracil-DNA glycosylase (217 aa).

Residue aspartate 62 is the Proton acceptor of the active site.

This sequence belongs to the uracil-DNA glycosylase (UDG) superfamily. UNG family.

The protein localises to the cytoplasm. It catalyses the reaction Hydrolyzes single-stranded DNA or mismatched double-stranded DNA and polynucleotides, releasing free uracil.. In terms of biological role, excises uracil residues from the DNA which can arise as a result of misincorporation of dUMP residues by DNA polymerase or due to deamination of cytosine. The chain is Uracil-DNA glycosylase from Streptococcus equi subsp. zooepidemicus (strain H70).